We begin with the raw amino-acid sequence, 386 residues long: MAARPLITVHSDKGAASESNVTLPAVFRAPIRPDIVNFVHFELKKNGRQPYAVSQKAGHQTSAESWGTGRAVARIPRVRGGGTHRSGQGAFGNMCRGRRMFAPTKTWRRWHRRVNTTQRRHALVSAIAATGIPAVVMSKGHCIEQIPEVPLVVSDSVESIKKTKEAVVVLRRLKAWPDVEKVKNSRRFRAGKGKLRNRRAIQRRGPLIIYGTDNGISRAFRNIPGITLVNVNRLNLLSMAPGGHVGRFCIWTESAFKQLDNIYGTWKRPSAEKSHYNLPMPKMTNTDLSRLLKSDEIQNALREPKKDKARRLQKKNPLKNYRVMMRLNPFAGAQKAAAKAVEQRRLKEKQAKLDQKRGIATPVEGAGKGRPRKTTAKPTKAKAGKK.

Over residues 341–357 (VEQRRLKEKQAKLDQKR) the composition is skewed to basic and acidic residues. The interval 341-386 (VEQRRLKEKQAKLDQKRGIATPVEGAGKGRPRKTTAKPTKAKAGKK) is disordered. The segment covering 369–386 (GRPRKTTAKPTKAKAGKK) has biased composition (basic residues).

This sequence belongs to the universal ribosomal protein uL4 family.

This is Large ribosomal subunit protein uL4 (RPL4) from Urechis caupo (Innkeeper worm).